The sequence spans 88 residues: Large ribosomal subunit protein bL27 (88 aa).

This sequence belongs to the bacterial ribosomal protein bL27 family.

The protein is Large ribosomal subunit protein bL27 of Acidobacterium capsulatum (strain ATCC 51196 / DSM 11244 / BCRC 80197 / JCM 7670 / NBRC 15755 / NCIMB 13165 / 161).